The primary structure comprises 72 residues: Heat-stable enterotoxin ST-IA/ST-P (72 aa).

An N-terminal signal peptide occupies residues 1 to 19 (MKKLMLAIFISVLSFPSFS). Residues 20–54 (QSTESLDSSKEKITLETKKCDVVKNNSEKKSENMN) constitute a propeptide that is removed on maturation. 3 cysteine pairs are disulfide-bonded: C59-C64, C60-C68, and C63-C71.

Belongs to the heat-stable enterotoxin family.

It localises to the secreted. Toxin which activates the particulate form of guanylate cyclase and increases cyclic GMP levels within the host intestinal epithelial cells. This chain is Heat-stable enterotoxin ST-IA/ST-P (sta1), found in Escherichia coli.